A 356-amino-acid chain; its full sequence is MTTIISGLRFRGKICDENRVTETIEENNQENNKKFIEEFYPDKESDKNFSDDDSDDSDDSDDSENSDEEFDNKFTEKKPIGQYINIIDKMCRNKSDKEFLRKTIKNSIGYFDWTVQDRDKIYDFTQKKFGFKKLVCVKDNMEPIIELLALVLIPDSVDIIKSKNSNYKNQIKTDIMYVHSLFVLQNSNSEILDKDFANNLPQYQIPIDFFSKYYCVEGTGDMKRYYPSALIKKSFVKGITFFLDFNDAQKIKIMDDLDKLSISNLKKREIATAMFILNLESMINDSIINEKRALEKLKALTKGNLIGIVNHLNNMKIGRDVIEMMIIEDTLNHSHSNKIKELENKITELKYQNEIN.

Positions 25 to 72 are disordered; the sequence is EENNQENNKKFIEEFYPDKESDKNFSDDDSDDSDDSDDSENSDEEFDN. Basic and acidic residues predominate over residues 31-50; sequence NNKKFIEEFYPDKESDKNFS. A compositionally biased stretch (acidic residues) spans 51-70; that stretch reads DDDSDDSDDSDDSENSDEEF. Positions 328–356 form a coiled coil; it reads EDTLNHSHSNKIKELENKITELKYQNEIN.

The protein belongs to the mimivirus L17/R827 family.

This is an uncharacterized protein from Acanthamoeba polyphaga mimivirus (APMV).